A 362-amino-acid chain; its full sequence is Methionine import ATP-binding protein MetN (362 aa).

Positions 2 to 241 (IHIENLSKTY…PRHEVTRAMV (240 aa)) constitute an ABC transporter domain. 38-45 (GPSGAGKS) provides a ligand contact to ATP.

The protein belongs to the ABC transporter superfamily. Methionine importer (TC 3.A.1.24) family. In terms of assembly, the complex is composed of two ATP-binding proteins (MetN), two transmembrane proteins (MetI) and a solute-binding protein (MetQ).

It is found in the cell inner membrane. It catalyses the reaction L-methionine(out) + ATP + H2O = L-methionine(in) + ADP + phosphate + H(+). The enzyme catalyses D-methionine(out) + ATP + H2O = D-methionine(in) + ADP + phosphate + H(+). In terms of biological role, part of the ABC transporter complex MetNIQ involved in methionine import. Responsible for energy coupling to the transport system. This Bordetella bronchiseptica (strain ATCC BAA-588 / NCTC 13252 / RB50) (Alcaligenes bronchisepticus) protein is Methionine import ATP-binding protein MetN.